The following is a 348-amino-acid chain: Probable dual-specificity RNA methyltransferase RlmN (348 aa).

Glu-89 functions as the Proton acceptor in the catalytic mechanism. In terms of domain architecture, Radical SAM core spans 95–328 (HKNRNTVCVS…VTLRISYGSK (234 aa)). The cysteines at positions 102 and 333 are disulfide-linked. 3 residues coordinate [4Fe-4S] cluster: Cys-109, Cys-113, and Cys-116. Residues 159–160 (GE), Ser-191, 214–216 (SLH), and Asn-290 contribute to the S-adenosyl-L-methionine site. Catalysis depends on Cys-333, which acts as the S-methylcysteine intermediate.

This sequence belongs to the radical SAM superfamily. RlmN family. [4Fe-4S] cluster is required as a cofactor.

The protein localises to the cytoplasm. It catalyses the reaction adenosine(2503) in 23S rRNA + 2 reduced [2Fe-2S]-[ferredoxin] + 2 S-adenosyl-L-methionine = 2-methyladenosine(2503) in 23S rRNA + 5'-deoxyadenosine + L-methionine + 2 oxidized [2Fe-2S]-[ferredoxin] + S-adenosyl-L-homocysteine. It carries out the reaction adenosine(37) in tRNA + 2 reduced [2Fe-2S]-[ferredoxin] + 2 S-adenosyl-L-methionine = 2-methyladenosine(37) in tRNA + 5'-deoxyadenosine + L-methionine + 2 oxidized [2Fe-2S]-[ferredoxin] + S-adenosyl-L-homocysteine. Its function is as follows. Specifically methylates position 2 of adenine 2503 in 23S rRNA and position 2 of adenine 37 in tRNAs. In Dictyoglomus turgidum (strain DSM 6724 / Z-1310), this protein is Probable dual-specificity RNA methyltransferase RlmN.